We begin with the raw amino-acid sequence, 236 residues long: Phosphoribosylaminoimidazole-succinocarboxamide synthase (236 aa).

Belongs to the SAICAR synthetase family.

The enzyme catalyses 5-amino-1-(5-phospho-D-ribosyl)imidazole-4-carboxylate + L-aspartate + ATP = (2S)-2-[5-amino-1-(5-phospho-beta-D-ribosyl)imidazole-4-carboxamido]succinate + ADP + phosphate + 2 H(+). It functions in the pathway purine metabolism; IMP biosynthesis via de novo pathway; 5-amino-1-(5-phospho-D-ribosyl)imidazole-4-carboxamide from 5-amino-1-(5-phospho-D-ribosyl)imidazole-4-carboxylate: step 1/2. This chain is Phosphoribosylaminoimidazole-succinocarboxamide synthase, found in Pseudomonas putida (strain GB-1).